The sequence spans 556 residues: Mitochondrial distribution and morphology protein 34-2 (556 aa).

The region spanning 1 to 195 (MAFNFNWSPL…LPAIIHRLSL (195 aa)) is the SMP-LTD domain. 3 disordered regions span residues 206 to 239 (EEMN…DSLG), 299 to 423 (TDTS…PVTP), and 440 to 473 (HLPS…DATP). Positions 299–333 (TDTSEFPSSVISPLSPTLSREQSQMGSMSSLHETA) are enriched in polar residues. Over residues 334–357 (SNASMQSRPSMSSHSFSTSTYGLS) the composition is skewed to low complexity. Residues 362 to 374 (RHSKAHARKRKKR) are compositionally biased toward basic residues. Over residues 375-385 (VVDLRRPKTTD) the composition is skewed to basic and acidic residues. Residues 391–402 (SDESVMTESSRP) are compositionally biased toward polar residues. Residues 459–468 (ETIRGPKAED) show a composition bias toward basic and acidic residues.

It belongs to the MDM34 family. Component of the ER-mitochondria encounter structure (ERMES) or MDM complex, composed of mmm1, mdm10, mdm12 and mdm34.

Its subcellular location is the mitochondrion outer membrane. Its function is as follows. Component of the ERMES/MDM complex, which serves as a molecular tether to connect the endoplasmic reticulum (ER) and mitochondria. Components of this complex are involved in the control of mitochondrial shape and protein biogenesis, and function in nonvesicular lipid trafficking between the ER and mitochondria. Mdm34 is required for the interaction of the ER-resident membrane protein mmm1 and the outer mitochondrial membrane-resident beta-barrel protein mdm10. This Penicillium rubens (strain ATCC 28089 / DSM 1075 / NRRL 1951 / Wisconsin 54-1255) (Penicillium chrysogenum) protein is Mitochondrial distribution and morphology protein 34-2.